The primary structure comprises 308 residues: Carbonic anhydrase 6 (308 aa).

Residues 1-17 form the signal peptide; it reads MRALVLLLSLFLLGGQA. The 258-residue stretch at 21 to 278 folds into the Alpha-carbonic anhydrase domain; it reads SDWTYSEGAL…LNHRVVESNF (258 aa). The cysteines at positions 42 and 224 are disulfide-linked. Asn67 is a glycosylation site (N-linked (GlcNAc...) asparagine). His85 acts as the Proton donor/acceptor in catalysis. 3 residues coordinate Zn(2+): His111, His113, and His138. 220–221 is a binding site for substrate; that stretch reads TT. N-linked (GlcNAc...) asparagine glycosylation is present at Asn256.

Belongs to the alpha-carbonic anhydrase family. The cofactor is Zn(2+). Major constituent of saliva.

It is found in the secreted. The catalysed reaction is hydrogencarbonate + H(+) = CO2 + H2O. Inhibited by coumarins, sulfonamide derivatives such as acetazolamide (AZA), saccharin and Foscarnet (phosphonoformate trisodium salt). Reversible hydration of carbon dioxide. Its role in saliva is unknown. This is Carbonic anhydrase 6 (CA6) from Homo sapiens (Human).